The following is a 213-amino-acid chain: ATP synthase peripheral stalk subunit OSCP, mitochondrial (213 aa).

Residues methionine 1 to proline 23 constitute a mitochondrion transit peptide. The SIFI-degron motif lies at alanine 5–proline 23. 4 positions are modified to N6-acetyllysine: lysine 54, lysine 60, lysine 70, and lysine 73. The residue at position 90 (lysine 90) is an N6-succinyllysine. N6-acetyllysine; alternate occurs at positions 158 and 162. An N6-succinyllysine; alternate mark is found at lysine 158 and lysine 162. An N6-acetyllysine mark is found at lysine 172, lysine 176, and lysine 192. The residue at position 199 (lysine 199) is an N6-succinyllysine.

Belongs to the ATPase delta chain family. In terms of assembly, component of the ATP synthase complex composed at least of ATP5F1A/subunit alpha, ATP5F1B/subunit beta, ATP5MC1/subunit c (homooctomer), MT-ATP6/subunit a, MT-ATP8/subunit 8, ATP5ME/subunit e, ATP5MF/subunit f, ATP5MG/subunit g, ATP5MK/subunit k, ATP5MJ/subunit j, ATP5F1C/subunit gamma, ATP5F1D/subunit delta, ATP5F1E/subunit epsilon, ATP5PF/subunit F6, ATP5PB/subunit b, ATP5PD/subunit d, ATP5PO/subunit OSCP. ATP synthase complex consists of a soluble F(1) head domain (subunits alpha(3) and beta(3)) - the catalytic core - and a membrane F(0) domain - the membrane proton channel (subunits c, a, 8, e, f, g, k and j). These two domains are linked by a central stalk (subunits gamma, delta, and epsilon) rotating inside the F1 region and a stationary peripheral stalk (subunits F6, b, d, and OSCP). Post-translationally, acetylation at Lys-162 decreases ATP production. Deacetylated by SIRT3. In terms of processing, in response to mitochondrial stress, the precursor protein is ubiquitinated by the SIFI complex in the cytoplasm before mitochondrial import, leading to its degradation. Within the SIFI complex, UBR4 initiates ubiquitin chain that are further elongated or branched by KCMF1.

The protein resides in the mitochondrion. Its subcellular location is the mitochondrion inner membrane. In terms of biological role, subunit OSCP, of the mitochondrial membrane ATP synthase complex (F(1)F(0) ATP synthase or Complex V) that produces ATP from ADP in the presence of a proton gradient across the membrane which is generated by electron transport complexes of the respiratory chain. ATP synthase complex consist of a soluble F(1) head domain - the catalytic core - and a membrane F(1) domain - the membrane proton channel. These two domains are linked by a central stalk rotating inside the F(1) region and a stationary peripheral stalk. During catalysis, ATP synthesis in the catalytic domain of F(1) is coupled via a rotary mechanism of the central stalk subunits to proton translocation. In vivo, can only synthesize ATP although its ATP hydrolase activity can be activated artificially in vitro. Part of the complex F(0) domain. Part of the complex F(0) domain and the peripheric stalk, which acts as a stator to hold the catalytic alpha(3)beta(3) subcomplex and subunit a/ATP6 static relative to the rotary elements. The sequence is that of ATP synthase peripheral stalk subunit OSCP, mitochondrial from Plecturocebus moloch (Dusky titi monkey).